Reading from the N-terminus, the 169-residue chain is MNPLKKKAPAKVSASKQKRKNREELNAEGRARKREKKHRGNPPGNRNQEQSGDKHPSGKQQRDPRLGSKVPVPLIVGEQPTKPVVANKVETKPRLSPQEELAMLENDDRLDALLERLENGESLSKEEHAYVDTTLDRIDALMEELGIKLDEEEREEEKQDDIMQLLKGN.

Disordered regions lie at residues 1–83 and 150–169; these read MNPL…PTKP and DEEEREEEKQDDIMQLLKGN. The segment covering 21–30 has biased composition (basic and acidic residues); the sequence is NREELNAEGR. Over residues 31–40 the composition is skewed to basic residues; that stretch reads ARKREKKHRG. Basic and acidic residues-rich tracts occupy residues 51–66 and 150–161; these read SGDKHPSGKQQRDPRL and DEEEREEEKQDD.

Belongs to the YihI family. Interacts with Der.

A GTPase-activating protein (GAP) that modifies Der/EngA GTPase function. May play a role in ribosome biogenesis. The sequence is that of Der GTPase-activating protein YihI from Photorhabdus laumondii subsp. laumondii (strain DSM 15139 / CIP 105565 / TT01) (Photorhabdus luminescens subsp. laumondii).